Consider the following 487-residue polypeptide: NADH-quinone oxidoreductase subunit N (487 aa).

Transmembrane regions (helical) follow at residues 8 to 28 (LIAMLPLLIVGLTVVVVMLSI), 35 to 55 (FINATLTVIGLNLALLSLYFV), 78 to 98 (GLVIIASLATSTFAYPWLVGY), 104 to 124 (EFYLLVLIAALGGILLTSANH), 125 to 145 (LASLFLGIELLTLPLFGLIGY), 159 to 179 (YMLLSAAASSFLLFGMALLYA), 203 to 223 (ILAGLGMMIVGLGFKLSLVPF), 235 to 255 (PAPVSTFLATASKIAIFAVVM), 271 to 291 (LVLSIIAVASILFGNLMAISQ), 297 to 317 (LLGYSSIAHLGYLLIALVAVQ), 328 to 348 (IGVYLAGYLFSSLGAFGVVSL), 376 to 396 (AVMTVMMLSLAGIPMTLGFIG), 409 to 428 (LWWLTGAVVLGSAIGLYYYL), and 451 to 471 (ALTAGGVVVLISAILVLVLGI).

Belongs to the complex I subunit 2 family. As to quaternary structure, NDH-1 is composed of 13 different subunits. Subunits NuoA, H, J, K, L, M, N constitute the membrane sector of the complex.

Its subcellular location is the cell inner membrane. It carries out the reaction a quinone + NADH + 5 H(+)(in) = a quinol + NAD(+) + 4 H(+)(out). NDH-1 shuttles electrons from NADH, via FMN and iron-sulfur (Fe-S) centers, to quinones in the respiratory chain. The immediate electron acceptor for the enzyme in this species is believed to be ubiquinone. Couples the redox reaction to proton translocation (for every two electrons transferred, four hydrogen ions are translocated across the cytoplasmic membrane), and thus conserves the redox energy in a proton gradient. The polypeptide is NADH-quinone oxidoreductase subunit N (Yersinia pestis bv. Antiqua (strain Angola)).